The primary structure comprises 393 residues: Inulin fructotransferase [DFA-I-forming] (393 aa).

The enzyme catalyses Produces alpha-D-fructofuranose beta-D-fructofuranose 1,2':2,1'-dianhydride (DFA I) by successively eliminating the diminishing (2-&gt;1)-beta-D-fructan (inulin) chain from the terminal D-fructosyl-D-fructosyl disaccharide.. The polypeptide is Inulin fructotransferase [DFA-I-forming] (Arthrobacter globiformis).